Consider the following 418-residue polypeptide: Gamma-glutamyl phosphate reductase (418 aa).

The protein belongs to the gamma-glutamyl phosphate reductase family.

It is found in the cytoplasm. The enzyme catalyses L-glutamate 5-semialdehyde + phosphate + NADP(+) = L-glutamyl 5-phosphate + NADPH + H(+). It functions in the pathway amino-acid biosynthesis; L-proline biosynthesis; L-glutamate 5-semialdehyde from L-glutamate: step 2/2. Catalyzes the NADPH-dependent reduction of L-glutamate 5-phosphate into L-glutamate 5-semialdehyde and phosphate. The product spontaneously undergoes cyclization to form 1-pyrroline-5-carboxylate. The polypeptide is Gamma-glutamyl phosphate reductase (Desulfosudis oleivorans (strain DSM 6200 / JCM 39069 / Hxd3) (Desulfococcus oleovorans)).